The following is a 320-amino-acid chain: Ferrochelatase (320 aa).

2 residues coordinate Fe cation: His-194 and Glu-275.

It belongs to the ferrochelatase family.

The protein localises to the cytoplasm. The enzyme catalyses heme b + 2 H(+) = protoporphyrin IX + Fe(2+). Its pathway is porphyrin-containing compound metabolism; protoheme biosynthesis; protoheme from protoporphyrin-IX: step 1/1. Its function is as follows. Catalyzes the ferrous insertion into protoporphyrin IX. The polypeptide is Ferrochelatase (Cronobacter sakazakii (strain ATCC BAA-894) (Enterobacter sakazakii)).